Reading from the N-terminus, the 229-residue chain is Coiled-coil domain-containing protein 134 (229 aa).

The first 22 residues, 1-22 (MDPVQLLSFLLALLLPLGTALD), serve as a signal peptide directing secretion. Positions 192 to 218 (NTDAFQKALREEEKRRRKEEKRKEIRK) form a coiled coil. Positions 201-229 (REEEKRRRKEEKRKEIRKGPRITRSRSEL) are disordered. The span at 219-229 (GPRITRSRSEL) shows a compositional bias: basic residues. Positions 226–229 (RSEL) match the Prevents secretion from ER motif.

This sequence belongs to the CCDC134 family.

It is found in the endoplasmic reticulum lumen. Functionally, molecular adapter required to prevent protein hyperglycosylation of HSP90B1: during translation, associates with nascent HSP90B1 and the STT3A catalytic component of the OST-A complex and tethers them to a specialized translocon that forms a microenvironment for HSP90B1 folding. In the CCDC134-containing translocon, STT3A associates with the SRT pseudosubstrate motif of HSP90B1, preventing access to facultative glycosylation sites until folding is completed, preventing hyperglycosylation and subsequent degradation of HSP90B1. The chain is Coiled-coil domain-containing protein 134 (ccdc134) from Xenopus tropicalis (Western clawed frog).